The primary structure comprises 237 residues: MPVVYKRILLKLSGEALMGDGHYGIDRAVVEHIVVEVAGVLQLGVEVAIVVGGGNIFRGMKSAGDGMDRVTADYMGMLATTMNALALHDAMRRNGVVSRVQSALRIDQVVEPYVRGKALRYLDERKVVVFAAGTGNPFFTTDTAAALRGMEMNANIVLKATKVDGIYTSDPLKNKDAQRFQSLTFDEAISKNLQVMDATALTLCRDQKLPINVFSIFKTGALKRVIMGEDEGTSVFV.

Residue 11–14 (KLSG) coordinates ATP. Residue glycine 53 coordinates UMP. Residues glycine 54 and arginine 58 each coordinate ATP. UMP is bound by residues aspartate 73 and 134 to 141 (TGNPFFTT). Threonine 161, tyrosine 167, and aspartate 170 together coordinate ATP.

Belongs to the UMP kinase family. As to quaternary structure, homohexamer.

The protein resides in the cytoplasm. The catalysed reaction is UMP + ATP = UDP + ADP. Its pathway is pyrimidine metabolism; CTP biosynthesis via de novo pathway; UDP from UMP (UMPK route): step 1/1. With respect to regulation, inhibited by UTP. In terms of biological role, catalyzes the reversible phosphorylation of UMP to UDP. This Nitrosomonas europaea (strain ATCC 19718 / CIP 103999 / KCTC 2705 / NBRC 14298) protein is Uridylate kinase.